Here is a 192-residue protein sequence, read N- to C-terminus: NADH-quinone oxidoreductase subunit B (192 aa).

The [4Fe-4S] cluster site is built by C71, C72, C136, and C166.

The protein belongs to the complex I 20 kDa subunit family. In terms of assembly, NDH-1 is composed of 14 different subunits. Subunits NuoB, C, D, E, F, and G constitute the peripheral sector of the complex. [4Fe-4S] cluster serves as cofactor.

Its subcellular location is the cell inner membrane. It catalyses the reaction a quinone + NADH + 5 H(+)(in) = a quinol + NAD(+) + 4 H(+)(out). Its function is as follows. NDH-1 shuttles electrons from NADH, via FMN and iron-sulfur (Fe-S) centers, to quinones in the respiratory chain. Couples the redox reaction to proton translocation (for every two electrons transferred, four hydrogen ions are translocated across the cytoplasmic membrane), and thus conserves the redox energy in a proton gradient. The protein is NADH-quinone oxidoreductase subunit B of Azorhizobium caulinodans (strain ATCC 43989 / DSM 5975 / JCM 20966 / LMG 6465 / NBRC 14845 / NCIMB 13405 / ORS 571).